A 193-amino-acid chain; its full sequence is Gas vesicle protein C (193 aa).

5 consecutive repeats follow at residues 19–51 (VAEL…LQAF), 52–84 (YKDL…LLAF), 85–117 (HKEL…LLAF), 118–150 (YQEV…LLAF), and 151–183 (HKEL…LLKF). A 5 X 33 AA tandem repeats region spans residues 19–183 (VAELSLETRE…KEQKESLLKF (165 aa)).

It belongs to the gas vesicle GvpC family.

The protein localises to the gas vesicle. Its function is as follows. Confers stability, involved in shaping gas vesicles (GV), hollow, gas-filled proteinaceous nanostructures. During planktonic growth they allow positioning of the organism at a favorable depth for light or nutrient acquisition. The ratio of GvpA:GvpC is estimated to be 25:1. GvpC strengthens the GV wall, probably by connecting several GvpA proteins in the same and/or adjacent ribs. Removal of GvpC by SDS reduces the critical collapse pressure (CCP) of stored gas vesicles from 0.23 Mpa to 0.08 MPa. Removal of GvpC by urea reduces CCP of freshly isolated GVs from 0.550 MPa to 0.190 MPa; addition of recombinant GvpC restores CCP to 0.508 MPa. As the turgor pressure in this species is usually 0.35 MPa (plus the water column pressure in its growth environment), this protein is essential for GV formation. This chain is Gas vesicle protein C, found in Dolichospermum flosaquae (Anabaena flos-aquae).